The primary structure comprises 149 residues: Alpha-crystallin A chain (149 aa).

The sHSP domain maps to 41–149 (LFRTVLESGI…DTSYSERPIP (109 aa)). H89, E91, and H96 together coordinate Zn(2+).

Belongs to the small heat shock protein (HSP20) family. In terms of assembly, heteropolymer composed of three CRYAA and one CRYAB subunits. Inter-subunit bridging via zinc ions enhances stability, which is crucial as there is no protein turn over in the lens. Zinc coordination is achieved at least by His-89, Glu-91 and His-96. His-83 and Glu-85 come from the same molecule within the oligomer, while His-90 residue is provided by another molecule. Can also form homodimers and homotetramers (dimers of dimers) which serve as the building blocks of homooligomers.

It localises to the cytoplasm. The protein localises to the nucleus. Contributes to the transparency and refractive index of the lens. May act as a chaperone, preventing aggregation of various proteins under a wide range of stress conditions. This chain is Alpha-crystallin A chain (CRYAA), found in Trachemys scripta elegans (Red-eared slider turtle).